A 409-amino-acid polypeptide reads, in one-letter code: TNF receptor-associated factor 1 (409 aa).

Residue Ser-139 is modified to Phosphoserine. The stretch at 167–256 forms a coiled coil; it reads EELALQHLVK…EHSLRLMEEA (90 aa). Residues Lys-178 and Lys-186 each participate in a glycyl lysine isopeptide (Lys-Gly) (interchain with G-Cter in ubiquitin) cross-link. The MATH domain maps to 259–405; sequence DGTFLWKITN…DDTMFLKCIV (147 aa).

In terms of assembly, homotrimer. Heterotrimer with TRAF2. Interacts with TNFRSF1A/TNFR1, TNFRSF1B/TNFR2, TNFRSF4, TNFRSF5/CD40, TNFRSF8/CD30, TNFRSF9/CD137, TNFRSF11A/RANK, TNFRSF13C, TNFRSF18/AITR, TNFRSF17/BCMA, TNFRSF19/TROY, TNFRSF19L/RELT, XEDAR, EDAR, Epstein-Barr virus BNFL1/LMP-1, TANK/ITRAF, TRAIP and RIPK2. Interacts with BIRC2 and BIRC3 N-terminus; a single BIRC2 or BIRC3 molecule interacts with a heterotrimer formed by TRAF1 and TRAF2. Interacts with MAP3K14. Interacts with NFATC2IP, TRAFD1 and with HIVEP3. Interacts with GPS2. Post-translationally, polyubiquitinated by BIRC2 and/or BIRC3, leading to its subsequent proteasomal degradation. Ubiquitinated by the SCF(FBXL2) complex, leading to its degradation by the proteasome.

It localises to the cytoplasm. In terms of biological role, adapter molecule that regulates the activation of NF-kappa-B and JNK. Plays a role in the regulation of cell survival and apoptosis. The heterotrimer formed by TRAF1 and TRAF2 is part of a E3 ubiquitin-protein ligase complex that promotes ubiquitination of target proteins, such as MAP3K14. The TRAF1/TRAF2 complex recruits the antiapoptotic E3 protein-ubiquitin ligases BIRC2 and BIRC3 to TNFRSF1B/TNFR2. This is TNF receptor-associated factor 1 (Traf1) from Mus musculus (Mouse).